An 834-amino-acid polypeptide reads, in one-letter code: Ras GTPase-activating protein 3 (834 aa).

2 consecutive C2 domains span residues methionine 1–phenylalanine 112 and valine 123–tyrosine 263. Alanine 2 is subject to N-acetylalanine. The residue at position 66 (tyrosine 66) is a Phosphotyrosine. At serine 77 the chain carries Phosphoserine. Threonine 110 carries the post-translational modification Phosphothreonine. Residues glycine 346–isoleucine 561 enclose the Ras-GAP domain. One can recognise a PH domain in the interval isoleucine 576–glutamine 677. The segment at asparagine 679–glycine 715 adopts a Btk-type zinc-finger fold. Residues histidine 687, cysteine 698, cysteine 699, and cysteine 709 each coordinate Zn(2+). Residues lysine 806–methionine 834 are disordered. 2 positions are modified to phosphoserine: serine 809 and serine 833. Polar residues predominate over residues serine 818–methionine 834.

In terms of biological role, inhibitory regulator of the Ras-cyclic AMP pathway. May bind inositol tetrakisphosphate (IP4). The sequence is that of Ras GTPase-activating protein 3 (RASA3) from Bos taurus (Bovine).